Consider the following 484-residue polypeptide: Acid alpha-amylase (484 aa).

Asparagine 24 carries an N-linked (GlcNAc...) asparagine glycan. Cysteine 30 and cysteine 38 form a disulfide bridge. A substrate-binding site is contributed by tryptophan 83. Aspartate 121 provides a ligand contact to Ca(2+). Histidine 122 serves as a coordination point for substrate. Cysteines 150 and 164 form a disulfide. Asparagine 157 carries an N-linked (GlcNAc...) asparagine glycan. Residues glutamate 162 and aspartate 175 each contribute to the Ca(2+) site. Residue asparagine 197 is glycosylated (N-linked (GlcNAc...) asparagine). Arginine 204 contacts substrate. Aspartate 206, glutamate 210, and glutamate 230 together coordinate Ca(2+). Aspartate 206 functions as the Nucleophile in the catalytic mechanism. 209 to 210 (LE) is a substrate binding site. The active-site Proton donor is glutamate 230. Glycine 234 lines the substrate pocket. A disulfide bond links cysteine 240 and cysteine 283. Substrate is bound by residues aspartate 297 and arginine 344. Cysteine 440 and cysteine 475 are joined by a disulfide.

It belongs to the glycosyl hydrolase 13 family. In terms of assembly, monomer. It depends on Ca(2+) as a cofactor.

It is found in the secreted. It carries out the reaction Endohydrolysis of (1-&gt;4)-alpha-D-glucosidic linkages in polysaccharides containing three or more (1-&gt;4)-alpha-linked D-glucose units.. This is Acid alpha-amylase from Aspergillus niger.